We begin with the raw amino-acid sequence, 262 residues long: Glycerol uptake facilitator protein (262 aa).

The Cytoplasmic portion of the chain corresponds to 1-7 (MNFCSKK). A helical transmembrane segment spans residues 8–36 (KILKQCFFEFLGTGLIIFLGISSLVVSKL). Residues 37–41 (TNFHF) lie on the Extracellular side of the membrane. The chain crosses the membrane as a helical span at residues 42-62 (NHCEISCIWGLGVFISICFCS). The Cytoplasmic portion of the chain corresponds to 63 to 65 (SVS). The stretch at 66-69 (GAHL) is an intramembrane region. Positions 70–72 (NPA) match the NPA 1 motif. The helical intramembrane region spans 70-80 (NPAITIFLFLS). The Cytoplasmic segment spans residues 81–86 (SQFNKK). A helical transmembrane segment spans residues 87–110 (KVIPYILSQISGTFFFTFLIYLIF). Over 111–145 (NNLLNSFESKYNIVRGTKKSLELASLFCVFPKENY) the chain is Extracellular. The helical transmembrane segment at 146-171 (NFIHDFILEILIGIIFIIILMKLSEK) threads the bilayer. At 172-180 (NNLFKFYKF) the chain is on the cytoplasmic side. A helical transmembrane segment spans residues 181 to 197 (INPFLIGTLVIIINLFL). Residues 198–201 (TSYS) are Extracellular-facing. The stretch at 202 to 205 (NITL) is an intramembrane region. The NPA 2 motif lies at 206–208 (NPA). The segment at residues 206 to 219 (NPARDLGPRIFLSL) is an intramembrane region (helical). At 220-234 (IGWGKLAFTGDDNII) the chain is on the extracellular side. The chain crosses the membrane as a helical span at residues 235–259 (FPYFLIPTIAPIIGINLGGWIYILY). The Cytoplasmic portion of the chain corresponds to 260–262 (IKK).

Belongs to the MIP/aquaporin (TC 1.A.8) family.

It is found in the cell membrane. It catalyses the reaction glycerol(in) = glycerol(out). Mediates glycerol diffusion across the cytoplasmic membrane via a pore-type mechanism. The chain is Glycerol uptake facilitator protein (glpF) from Buchnera aphidicola subsp. Schizaphis graminum (strain Sg).